A 300-amino-acid polypeptide reads, in one-letter code: UDP-N-acetylenolpyruvoylglucosamine reductase (300 aa).

The FAD-binding PCMH-type domain occupies 29 to 193 (TGGPADLLVF…LSATFKLRSG (165 aa)). Arg172 is a catalytic residue. Ser222 serves as the catalytic Proton donor. Glu292 is a catalytic residue.

It belongs to the MurB family. FAD is required as a cofactor.

It localises to the cytoplasm. It carries out the reaction UDP-N-acetyl-alpha-D-muramate + NADP(+) = UDP-N-acetyl-3-O-(1-carboxyvinyl)-alpha-D-glucosamine + NADPH + H(+). Its pathway is cell wall biogenesis; peptidoglycan biosynthesis. Functionally, cell wall formation. The protein is UDP-N-acetylenolpyruvoylglucosamine reductase of Pediococcus pentosaceus (strain ATCC 25745 / CCUG 21536 / LMG 10740 / 183-1w).